The primary structure comprises 421 residues: Phosphatidylinositol 5-phosphate 4-kinase type-2 gamma (421 aa).

At Ala-2 the chain carries N-acetylalanine. Ser-26 is subject to Phosphoserine. The region spanning 43-420 is the PIPK domain; it reads AADPLVGVFL…RFLDFITNIF (378 aa). The required for interaction with PIP5K1A stretch occupies residues 69-75; it reads VMLLPDD. Position 349 is a phosphoserine (Ser-349).

As to quaternary structure, interacts with PIP5K1A; the interaction inhibits PIP5K1A kinase activity. In terms of processing, phosphorylated, phosphorylation is induced by EGF.

The protein resides in the endoplasmic reticulum. The protein localises to the cytoplasm. The catalysed reaction is a 1,2-diacyl-sn-glycero-3-phospho-(1D-myo-inositol-5-phosphate) + ATP = a 1,2-diacyl-sn-glycero-3-phospho-(1D-myo-inositol-4,5-bisphosphate) + ADP + H(+). It carries out the reaction 1,2-dihexadecanoyl-sn-glycero-3-phospho-(1D-myo-inositol-5-phosphate) + ATP = 1,2-dihexadecanoyl-sn-glycero-3-phospho-(1D-myo-inositol-4,5-bisphosphate) + ADP + H(+). It catalyses the reaction 1,2-dihexadecanoyl-sn-glycero-3-phospho-(1D-myo-inositol-5-phosphate) + GTP = 1,2-dihexadecanoyl-sn-glycero-3-phospho-(1D-myo-inositol-4,5-bisphosphate) + GDP + H(+). Functionally, phosphatidylinositol 5-phosphate 4-kinase with low enzymatic activity. May be a GTP sensor, has higher GTP-dependent kinase activity than ATP-dependent kinase activity. PIP4Ks negatively regulate insulin signaling through a catalytic-independent mechanism. They interact with PIP5Ks and suppress PIP5K-mediated PtdIns(4,5)P2 synthesis and insulin-dependent conversion to PtdIns(3,4,5)P3. The chain is Phosphatidylinositol 5-phosphate 4-kinase type-2 gamma from Homo sapiens (Human).